The primary structure comprises 220 residues: Protein-methionine-sulfoxide reductase heme-binding subunit MsrQ (220 aa).

The next 5 helical transmembrane spans lie at 20-40 (IWLLYAVGFVPAVWTFYLGAS), 52-72 (EHTLGLWALRFLILTLMVTPI), 86-106 (ALGLLAFYYALMHFATYMVLD), 122-142 (PFITIGMISLVLLVPLALTSN), and 159-179 (LVYVAIAGGAIHFIMSVKSWP).

This sequence belongs to the MsrQ family. As to quaternary structure, heterodimer of a catalytic subunit (MsrP) and a heme-binding subunit (MsrQ). FMN serves as cofactor. Heme b is required as a cofactor.

The protein resides in the cell inner membrane. Part of the MsrPQ system that repairs oxidized periplasmic proteins containing methionine sulfoxide residues (Met-O), using respiratory chain electrons. Thus protects these proteins from oxidative-stress damage caused by reactive species of oxygen and chlorine generated by the host defense mechanisms. MsrPQ is essential for the maintenance of envelope integrity under bleach stress, rescuing a wide series of structurally unrelated periplasmic proteins from methionine oxidation. MsrQ provides electrons for reduction to the reductase catalytic subunit MsrP, using the quinone pool of the respiratory chain. The sequence is that of Protein-methionine-sulfoxide reductase heme-binding subunit MsrQ from Brucella anthropi (strain ATCC 49188 / DSM 6882 / CCUG 24695 / JCM 21032 / LMG 3331 / NBRC 15819 / NCTC 12168 / Alc 37) (Ochrobactrum anthropi).